The following is a 274-amino-acid chain: Undecaprenyl-diphosphatase 1 (274 aa).

8 helical membrane passes run 7-27 (LEIF…WLPV), 48-68 (FIST…LVIF), 88-108 (VRLW…GILF), 115-135 (LFFN…IMIG), 151-171 (VTYK…IPGT), 189-209 (YVAA…ASAL), 221-241 (FEWL…IVVI), and 253-273 (FKVF…YFFL).

The protein belongs to the UppP family.

Its subcellular location is the cell membrane. It catalyses the reaction di-trans,octa-cis-undecaprenyl diphosphate + H2O = di-trans,octa-cis-undecaprenyl phosphate + phosphate + H(+). In terms of biological role, catalyzes the dephosphorylation of undecaprenyl diphosphate (UPP). Confers resistance to bacitracin. In Clostridioides difficile (strain 630) (Peptoclostridium difficile), this protein is Undecaprenyl-diphosphatase 1.